A 1050-amino-acid chain; its full sequence is Sucrose-phosphate synthase 4 (1050 aa).

The interval 134–167 (QGRNDAEEDLLSELSEGEKDKNDGEKEKSEVVTT) is disordered. The residue at position 148 (Ser-148) is a Phosphoserine. A compositionally biased stretch (basic and acidic residues) spans 149–163 (EGEKDKNDGEKEKSE). Ser-180 carries the post-translational modification Phosphoserine.

It belongs to the glycosyltransferase 1 family. In terms of assembly, homodimer or homotetramer.

The enzyme catalyses beta-D-fructose 6-phosphate + UDP-alpha-D-glucose = sucrose 6(F)-phosphate + UDP + H(+). Its pathway is glycan biosynthesis; sucrose biosynthesis; sucrose from D-fructose 6-phosphate and UDP-alpha-D-glucose: step 1/2. Its activity is regulated as follows. Activity is regulated by phosphorylation and moderated by concentration of metabolites and light. Functionally, plays a role in photosynthetic sucrose synthesis by catalyzing the rate-limiting step of sucrose biosynthesis from UDP-glucose and fructose- 6-phosphate. Involved in the regulation of carbon partitioning in the leaves of plants. May regulate the synthesis of sucrose and therefore play a major role as a limiting factor in the export of photoassimilates out of the leaf. Plays a role for sucrose availability that is essential for plant growth and fiber elongation. This Arabidopsis thaliana (Mouse-ear cress) protein is Sucrose-phosphate synthase 4.